A 42-amino-acid polypeptide reads, in one-letter code: Photosystem I reaction center subunit IX (42 aa).

Residues 7 to 27 (YLSVAPVLSTLWFGALAGLLI) traverse the membrane as a helical segment.

This sequence belongs to the PsaJ family.

Its subcellular location is the plastid. The protein resides in the chloroplast thylakoid membrane. In terms of biological role, may help in the organization of the PsaE and PsaF subunits. This Guizotia abyssinica (Niger) protein is Photosystem I reaction center subunit IX.